We begin with the raw amino-acid sequence, 289 residues long: Phosphate import ATP-binding protein PstB 2 (289 aa).

An ABC transporter domain is found at L37 to T276. Residue G69–S76 participates in ATP binding.

The protein belongs to the ABC transporter superfamily. Phosphate importer (TC 3.A.1.7) family. As to quaternary structure, the complex is composed of two ATP-binding proteins (PstB), two transmembrane proteins (PstC and PstA) and a solute-binding protein (PstS).

Its subcellular location is the cell inner membrane. The catalysed reaction is phosphate(out) + ATP + H2O = ADP + 2 phosphate(in) + H(+). Functionally, part of the ABC transporter complex PstSACB involved in phosphate import. Responsible for energy coupling to the transport system. The sequence is that of Phosphate import ATP-binding protein PstB 2 from Trichormus variabilis (strain ATCC 29413 / PCC 7937) (Anabaena variabilis).